Reading from the N-terminus, the 210-residue chain is 3-hexulose-6-phosphate synthase 1 (210 aa).

Belongs to the HPS/KGPDC family. HPS subfamily.

The enzyme catalyses D-ribulose 5-phosphate + formaldehyde = D-arabino-hex-3-ulose 6-phosphate. It functions in the pathway one-carbon metabolism; formaldehyde assimilation via RuMP pathway; D-fructose 6-phosphate from D-ribulose 5-phosphate and formaldehyde: step 1/2. Its function is as follows. Catalyzes the condensation of ribulose 5-phosphate with formaldehyde to form 3-hexulose 6-phosphate. This Staphylococcus saprophyticus subsp. saprophyticus (strain ATCC 15305 / DSM 20229 / NCIMB 8711 / NCTC 7292 / S-41) protein is 3-hexulose-6-phosphate synthase 1.